Here is a 337-residue protein sequence, read N- to C-terminus: Glyceraldehyde-3-phosphate dehydrogenase, cytosolic (337 aa).

The tract at residues M1–N151 is binding to NAD. NAD(+) is bound by residues R13–I14, D35, and R82. The interval A152 to Q337 is catalytic. D-glyceraldehyde 3-phosphate-binding positions include S153–T155, T184, T213–G214, and R236. The Nucleophile role is filled by C154. N318 provides a ligand contact to NAD(+).

The protein belongs to the glyceraldehyde-3-phosphate dehydrogenase family. In terms of assembly, homotetramer.

It is found in the cytoplasm. The catalysed reaction is D-glyceraldehyde 3-phosphate + phosphate + NAD(+) = (2R)-3-phospho-glyceroyl phosphate + NADH + H(+). It functions in the pathway carbohydrate degradation; glycolysis; pyruvate from D-glyceraldehyde 3-phosphate: step 1/5. Key enzyme in glycolysis that catalyzes the first step of the pathway by converting D-glyceraldehyde 3-phosphate (G3P) into 3-phospho-D-glyceroyl phosphate. Essential for the maintenance of cellular ATP levels and carbohydrate metabolism. The sequence is that of Glyceraldehyde-3-phosphate dehydrogenase, cytosolic (GAPC) from Mesembryanthemum crystallinum (Common ice plant).